The chain runs to 478 residues: Protein nucleotidyltransferase YdiU (478 aa).

8 residues coordinate ATP: Gly84, Gly86, Arg87, Lys107, Asp119, Gly120, Arg170, and Arg177. Asp246 serves as the catalytic Proton acceptor. Residues Asn247 and Asp256 each contribute to the Mg(2+) site. Asp256 is a binding site for ATP.

Belongs to the SELO family. It depends on Mg(2+) as a cofactor. Mn(2+) is required as a cofactor.

It catalyses the reaction L-seryl-[protein] + ATP = 3-O-(5'-adenylyl)-L-seryl-[protein] + diphosphate. The enzyme catalyses L-threonyl-[protein] + ATP = 3-O-(5'-adenylyl)-L-threonyl-[protein] + diphosphate. The catalysed reaction is L-tyrosyl-[protein] + ATP = O-(5'-adenylyl)-L-tyrosyl-[protein] + diphosphate. It carries out the reaction L-histidyl-[protein] + UTP = N(tele)-(5'-uridylyl)-L-histidyl-[protein] + diphosphate. It catalyses the reaction L-seryl-[protein] + UTP = O-(5'-uridylyl)-L-seryl-[protein] + diphosphate. The enzyme catalyses L-tyrosyl-[protein] + UTP = O-(5'-uridylyl)-L-tyrosyl-[protein] + diphosphate. Functionally, nucleotidyltransferase involved in the post-translational modification of proteins. It can catalyze the addition of adenosine monophosphate (AMP) or uridine monophosphate (UMP) to a protein, resulting in modifications known as AMPylation and UMPylation. This chain is Protein nucleotidyltransferase YdiU, found in Shigella boydii serotype 4 (strain Sb227).